Consider the following 135-residue polypeptide: NADPH-dependent 7-cyano-7-deazaguanine reductase (135 aa).

Cysteine 48 (thioimide intermediate) is an active-site residue. The Proton donor role is filled by aspartate 55. Substrate is bound by residues leucine 70–leucine 72 and histidine 89–glutamate 90.

The protein belongs to the GTP cyclohydrolase I family. QueF type 1 subfamily.

Its subcellular location is the cytoplasm. The catalysed reaction is 7-aminomethyl-7-carbaguanine + 2 NADP(+) = 7-cyano-7-deazaguanine + 2 NADPH + 3 H(+). It participates in tRNA modification; tRNA-queuosine biosynthesis. Functionally, catalyzes the NADPH-dependent reduction of 7-cyano-7-deazaguanine (preQ0) to 7-aminomethyl-7-deazaguanine (preQ1). The chain is NADPH-dependent 7-cyano-7-deazaguanine reductase from Prochlorococcus marinus (strain SARG / CCMP1375 / SS120).